A 439-amino-acid polypeptide reads, in one-letter code: Large ribosomal subunit protein mL65 (439 aa).

The protein belongs to the mitochondrion-specific ribosomal protein mL65 family. Component of the mitochondrial large ribosomal subunit (mt-LSU). Mature mammalian 55S mitochondrial ribosomes consist of a small (28S) and a large (39S) subunit. The 28S small subunit contains a 12S ribosomal RNA (12S mt-rRNA) and 30 different proteins. The 39S large subunit contains a 16S rRNA (16S mt-rRNA), a copy of mitochondrial valine transfer RNA (mt-tRNA(Val)), which plays an integral structural role, and 52 different proteins. mL65 forms a heterodimer with mL37. As to expression, heart, skeletal muscle, kidney and liver. Lower expression in placenta and peripheral blood leukocytes.

The protein resides in the mitochondrion. This is Large ribosomal subunit protein mL65 (MRPS30) from Homo sapiens (Human).